The primary structure comprises 304 residues: Acetyl-coenzyme A carboxylase carboxyl transferase subunit beta (304 aa).

In terms of domain architecture, CoA carboxyltransferase N-terminal spans valine 23 to valine 292. Zn(2+) is bound by residues cysteine 27, cysteine 30, cysteine 46, and cysteine 49. A C4-type zinc finger spans residues cysteine 27–cysteine 49. The segment at proline 285–alanine 304 is disordered. Residues proline 295–alanine 304 show a composition bias toward pro residues.

Belongs to the AccD/PCCB family. In terms of assembly, acetyl-CoA carboxylase is a heterohexamer composed of biotin carboxyl carrier protein (AccB), biotin carboxylase (AccC) and two subunits each of ACCase subunit alpha (AccA) and ACCase subunit beta (AccD). The cofactor is Zn(2+).

It localises to the cytoplasm. The enzyme catalyses N(6)-carboxybiotinyl-L-lysyl-[protein] + acetyl-CoA = N(6)-biotinyl-L-lysyl-[protein] + malonyl-CoA. It participates in lipid metabolism; malonyl-CoA biosynthesis; malonyl-CoA from acetyl-CoA: step 1/1. Component of the acetyl coenzyme A carboxylase (ACC) complex. Biotin carboxylase (BC) catalyzes the carboxylation of biotin on its carrier protein (BCCP) and then the CO(2) group is transferred by the transcarboxylase to acetyl-CoA to form malonyl-CoA. In Shigella sonnei (strain Ss046), this protein is Acetyl-coenzyme A carboxylase carboxyl transferase subunit beta.